We begin with the raw amino-acid sequence, 84 residues long: MPRPAYRSRSLRRVKVRTPGGRTVVHYEKRAKGVPKCPVTNLPLGGMNHKVYRFGISIRAPSRPYGGVFSHKVLARALRLAVRG.

Belongs to the eukaryotic ribosomal protein eL34 family.

In Pyrobaculum islandicum (strain DSM 4184 / JCM 9189 / GEO3), this protein is Large ribosomal subunit protein eL34.